Reading from the N-terminus, the 340-residue chain is KKKSGIAMCVGCGSQIHDQYILRVAPDLEWHAACLKCSECSQYLDETCTCFVRDGKTYCKRDYVRLFGIKCAKCNIGFCSSDLVMRARDNVYHMECFRCSVCSRQLVPGDEFSLRDEELLCRADHGLLLERASAGSPISPGNILSRSFHIADPVSVRQPPHRNHVHKQSEKTTRVRTVLNEKQLHTLRTCYNANPRPDALMKEQLVEMTGLSPRVIRVWFQNKRCKDKKRTIFMKQLQQQHHIDKTNLQGLTGTPMVAGSPIRHDNTVLGNPVEVQTYQPPWKALSEFALQSDLDQPAFRQLVSFSESGSMGNSSGSDVTSLSSQLPDTPNSMVPSPMDT.

LIM zinc-binding domains lie at 9 to 62 (CVGC…CKRD) and 71 to 125 (CAKC…RADH). Positions 172 to 231 (TTRVRTVLNEKQLHTLRTCYNANPRPDALMKEQLVEMTGLSPRVIRVWFQNKRCKDKKRT) form a DNA-binding region, homeobox. Positions 307 to 317 (ESGSMGNSSGS) are enriched in low complexity. The tract at residues 307-340 (ESGSMGNSSGSDVTSLSSQLPDTPNSMVPSPMDT) is disordered. Residues 318 to 340 (DVTSLSSQLPDTPNSMVPSPMDT) show a composition bias toward polar residues.

The protein resides in the nucleus. Its function is as follows. Binds to one of the cis-acting domain of the insulin gene enhancer. May be involved in subtype specialization of primary motoneurons. The polypeptide is Insulin gene enhancer protein ISL-2B (isl2b) (Oncorhynchus tshawytscha (Chinook salmon)).